The primary structure comprises 180 residues: NADH-quinone oxidoreductase subunit I (180 aa).

4Fe-4S ferredoxin-type domains follow at residues 50 to 80 (LTRDPDGEERCVACNLCAVACPVGCISLQKA) and 90 to 119 (EFFRINFSRCIFCGLCEEACPTTAIQLTPD). Residues C60, C63, C66, C70, C99, C102, C105, and C109 each coordinate [4Fe-4S] cluster.

Belongs to the complex I 23 kDa subunit family. As to quaternary structure, NDH-1 is composed of 13 different subunits. Subunits NuoA, H, J, K, L, M, N constitute the membrane sector of the complex. [4Fe-4S] cluster serves as cofactor.

Its subcellular location is the cell inner membrane. It catalyses the reaction a quinone + NADH + 5 H(+)(in) = a quinol + NAD(+) + 4 H(+)(out). NDH-1 shuttles electrons from NADH, via FMN and iron-sulfur (Fe-S) centers, to quinones in the respiratory chain. The immediate electron acceptor for the enzyme in this species is believed to be ubiquinone. Couples the redox reaction to proton translocation (for every two electrons transferred, four hydrogen ions are translocated across the cytoplasmic membrane), and thus conserves the redox energy in a proton gradient. This is NADH-quinone oxidoreductase subunit I from Yersinia pseudotuberculosis serotype O:1b (strain IP 31758).